The sequence spans 123 residues: Small ribosomal subunit protein uS12 (123 aa).

Aspartate 89 is subject to 3-methylthioaspartic acid. The segment at 101–123 is disordered; the sequence is SLDTAGVKDRKQSRSKYGAKRPK. Basic residues predominate over residues 113–123; that stretch reads SRSKYGAKRPK.

This sequence belongs to the universal ribosomal protein uS12 family. As to quaternary structure, part of the 30S ribosomal subunit. Contacts proteins S8 and S17. May interact with IF1 in the 30S initiation complex.

With S4 and S5 plays an important role in translational accuracy. Its function is as follows. Interacts with and stabilizes bases of the 16S rRNA that are involved in tRNA selection in the A site and with the mRNA backbone. Located at the interface of the 30S and 50S subunits, it traverses the body of the 30S subunit contacting proteins on the other side and probably holding the rRNA structure together. The combined cluster of proteins S8, S12 and S17 appears to hold together the shoulder and platform of the 30S subunit. This Laribacter hongkongensis (strain HLHK9) protein is Small ribosomal subunit protein uS12.